Consider the following 615-residue polypeptide: Isocitrate dehydrogenase kinase/phosphatase (615 aa).

ATP is bound by residues 325–331 (APGIKGM) and Lys-346. The active site involves Asp-381.

This sequence belongs to the AceK family.

The protein resides in the cytoplasm. The enzyme catalyses L-seryl-[isocitrate dehydrogenase] + ATP = O-phospho-L-seryl-[isocitrate dehydrogenase] + ADP + H(+). Functionally, bifunctional enzyme which can phosphorylate or dephosphorylate isocitrate dehydrogenase (IDH) on a specific serine residue. This is a regulatory mechanism which enables bacteria to bypass the Krebs cycle via the glyoxylate shunt in response to the source of carbon. When bacteria are grown on glucose, IDH is fully active and unphosphorylated, but when grown on acetate or ethanol, the activity of IDH declines drastically concomitant with its phosphorylation. The sequence is that of Isocitrate dehydrogenase kinase/phosphatase from Albidiferax ferrireducens (strain ATCC BAA-621 / DSM 15236 / T118) (Rhodoferax ferrireducens).